Consider the following 952-residue polypeptide: Protein translocase subunit SecA (952 aa).

ATP is bound by residues Gln-135, 153–157 (GEGKT), and Asp-575. Residues 614 to 624 (RHESRRIDNQL) are compositionally biased toward basic and acidic residues. 2 disordered regions span residues 614-636 (RHES…DPGS) and 916-946 (VSAK…GKKY). Zn(2+) is bound by residues Cys-938, Cys-940, Cys-949, and Cys-950.

It belongs to the SecA family. As to quaternary structure, monomer and homodimer. Part of the essential Sec protein translocation apparatus which comprises SecA, SecYEG and auxiliary proteins SecDF. Other proteins may also be involved. Zn(2+) serves as cofactor.

It is found in the cell membrane. The protein resides in the cytoplasm. It catalyses the reaction ATP + H2O + cellular proteinSide 1 = ADP + phosphate + cellular proteinSide 2.. Functionally, part of the Sec protein translocase complex. Interacts with the SecYEG preprotein conducting channel. Has a central role in coupling the hydrolysis of ATP to the transfer of proteins into and across the cell membrane, serving as an ATP-driven molecular motor driving the stepwise translocation of polypeptide chains across the membrane. This chain is Protein translocase subunit SecA, found in Dehalococcoides mccartyi (strain ATCC BAA-2100 / JCM 16839 / KCTC 5957 / BAV1).